The following is a 279-amino-acid chain: Tryptophan 2,3-dioxygenase (279 aa).

Substrate contacts are provided by residues 48–52 (FIVIH), Tyr110, and Arg114. His237 lines the heme pocket. Residue Thr251 participates in substrate binding.

Belongs to the tryptophan 2,3-dioxygenase family. In terms of assembly, homotetramer. Heme serves as cofactor.

The enzyme catalyses L-tryptophan + O2 = N-formyl-L-kynurenine. It functions in the pathway amino-acid degradation; L-tryptophan degradation via kynurenine pathway; L-kynurenine from L-tryptophan: step 1/2. Heme-dependent dioxygenase that catalyzes the oxidative cleavage of the L-tryptophan (L-Trp) pyrrole ring and converts L-tryptophan to N-formyl-L-kynurenine. Catalyzes the oxidative cleavage of the indole moiety. This chain is Tryptophan 2,3-dioxygenase, found in Bacillus cereus (strain ZK / E33L).